The following is a 1098-amino-acid chain: Trehalose synthase complex regulatory subunit TSL1 (1098 aa).

Phosphoserine occurs at positions 49, 53, 56, 71, 77, 135, 147, and 161. 3 disordered regions span residues 59 to 86, 129 to 168, and 192 to 244; these read APAP…RASS, SVER…QQQQ, and SQTS…PSIK. A compositionally biased stretch (polar residues) spans 72 to 86; it reads RSATRSPSAFNRASS. Tandem repeats lie at residues 144 to 150 and 158 to 164. The tract at residues 144 to 164 is 2 X 7 AA repeats of R-I-A-S-P-I-Q; that stretch reads RIASPIQHEHDSGSRIASPIQ. A compositionally biased stretch (polar residues) spans 213 to 227; that stretch reads RPTSAATSLVNRTKQ. The segment covering 228–242 has biased composition (low complexity); it reads GSASSGSSGSSAPPS. S229 carries the post-translational modification Phosphoserine. A Phosphothreonine modification is found at T251. Residues 274-297 form a disordered region; it reads ADISSSETSSQHNESDPDDLTTAP. Phosphoserine is present on S303. The TPS complex domain stretch occupies residues 320–812; it reads GGYSNKSKLK…FNQEGSKIFK (493 aa). T815 bears the Phosphothreonine mark. The segment at 1000–1027 is disordered; that stretch reads SSGQITNIQTPSQQNPSDQEQQPPASPT.

In the C-terminal section; belongs to the glycosyltransferase 20 family. As to quaternary structure, the trehalose synthase complex is composed of the two catalytic subunits TPS1 and TPS2, and at least one of the two regulatory subunits TPS3 or TSL1.

Its subcellular location is the cytoplasm. Its function is as follows. Regulatory subunit of the trehalose synthase complex that catalyzes the production of trehalose from glucose-6-phosphate and UDP-glucose in a two step process. May stabilize the trehalose synthase complex, and confer sensitivity to physiological concentrations of phosphate and to fructose 6-phosphate. This Saccharomyces cerevisiae (strain ATCC 204508 / S288c) (Baker's yeast) protein is Trehalose synthase complex regulatory subunit TSL1 (TSL1).